The primary structure comprises 1131 residues: Inositol hexakisphosphate and diphosphoinositol-pentakisphosphate kinase 2 (1131 aa).

The tract at residues 21-53 (DELLDQSKPENLDNLYEHTEDEEDEEDDEYDSP) is disordered. A compositionally biased stretch (basic and acidic residues) spans 25–38 (DQSKPENLDNLYEH). The segment covering 39-52 (TEDEEDEEDDEYDS) has biased composition (acidic residues). 67–68 (KK) contacts substrate. ATP is bound by residues arginine 148, lysine 201, histidine 208, arginine 227, 251 to 254 (EEFM), and 260 to 262 (DVK). Position 227 to 228 (227 to 228 (RK)) interacts with substrate. Residues lysine 262 and arginine 276 each coordinate substrate. Residues serine 278, aspartate 323, and 335–337 (DVN) each bind ATP. Residue 340–343 (SFVK) coordinates substrate. A polyphosphoinositide-binding domain region spans residues 385–456 (PTTSGTKMEL…VLDIARQLLV (72 aa)). A disordered region spans residues 912-951 (KGCEEDKNLPSGFGYRPASQENESSKKHTHANDSDEDLGV). Basic and acidic residues predominate over residues 934-951 (ESSKKHTHANDSDEDLGV).

This sequence belongs to the histidine acid phosphatase family. VIP1 subfamily.

The protein localises to the cytoplasm. The protein resides in the cytosol. The enzyme catalyses 1D-myo-inositol hexakisphosphate + ATP = 1-diphospho-1D-myo-inositol 2,3,4,5,6-pentakisphosphate + ADP. It catalyses the reaction 5-diphospho-1D-myo-inositol 1,2,3,4,6-pentakisphosphate + ATP + H(+) = 1,5-bis(diphospho)-1D-myo-inositol 2,3,4,6-tetrakisphosphate + ADP. Its function is as follows. Bifunctional inositol kinase that acts in concert with the IP6K kinases IP6K1, IP6K2 and IP6K3 to synthesize the diphosphate group-containing inositol pyrophosphates diphosphoinositol pentakisphosphate, PP-InsP5, and bis-diphosphoinositol tetrakisphosphate, (PP)2-InsP4. PP-InsP5 and (PP)2-InsP4, also respectively called InsP7 and InsP8, regulate a variety of cellular processes, including apoptosis, vesicle trafficking, cytoskeletal dynamics, exocytosis, insulin signaling and neutrophil activation. Phosphorylates inositol hexakisphosphate (InsP6) at position 1 to produce PP-InsP5 which is in turn phosphorylated by IP6Ks to produce (PP)2-InsP4. Alternatively, phosphorylates PP-InsP5 at position 1, produced by IP6Ks from InsP6, to produce (PP)2-InsP4. This chain is Inositol hexakisphosphate and diphosphoinositol-pentakisphosphate kinase 2, found in Xenopus laevis (African clawed frog).